The following is a 160-amino-acid chain: Transcription elongation factor GreA (160 aa).

Residues 12–76 (EGVKKLEEEL…QLENMLKNAS (65 aa)) are a coiled coil.

It belongs to the GreA/GreB family.

Its function is as follows. Necessary for efficient RNA polymerase transcription elongation past template-encoded arresting sites. The arresting sites in DNA have the property of trapping a certain fraction of elongating RNA polymerases that pass through, resulting in locked ternary complexes. Cleavage of the nascent transcript by cleavage factors such as GreA or GreB allows the resumption of elongation from the new 3'terminus. GreA releases sequences of 2 to 3 nucleotides. This is Transcription elongation factor GreA from Clostridium botulinum (strain Hall / ATCC 3502 / NCTC 13319 / Type A).